The following is an 898-amino-acid chain: Alanine--tRNA ligase (898 aa).

Zn(2+)-binding residues include H582, H586, C685, and H689.

Belongs to the class-II aminoacyl-tRNA synthetase family. It depends on Zn(2+) as a cofactor.

It localises to the cytoplasm. It catalyses the reaction tRNA(Ala) + L-alanine + ATP = L-alanyl-tRNA(Ala) + AMP + diphosphate. Functionally, catalyzes the attachment of alanine to tRNA(Ala) in a two-step reaction: alanine is first activated by ATP to form Ala-AMP and then transferred to the acceptor end of tRNA(Ala). Also edits incorrectly charged Ser-tRNA(Ala) and Gly-tRNA(Ala) via its editing domain. The polypeptide is Alanine--tRNA ligase (Mycolicibacterium gilvum (strain PYR-GCK) (Mycobacterium gilvum (strain PYR-GCK))).